The following is a 307-amino-acid chain: tRNA pseudouridine synthase B (307 aa).

Asp-38 serves as the catalytic Nucleophile.

The protein belongs to the pseudouridine synthase TruB family. Type 1 subfamily.

The enzyme catalyses uridine(55) in tRNA = pseudouridine(55) in tRNA. In terms of biological role, responsible for synthesis of pseudouridine from uracil-55 in the psi GC loop of transfer RNAs. The protein is tRNA pseudouridine synthase B of Bacillus cereus (strain ATCC 14579 / DSM 31 / CCUG 7414 / JCM 2152 / NBRC 15305 / NCIMB 9373 / NCTC 2599 / NRRL B-3711).